The following is a 280-amino-acid chain: MGIRKYRPMTPGTRQRSGADFAEVTKSKPEKKLTKYVHRKQGRNNQGVITSRFRGGGHKRLYRFIDFKRDKRGIPAEVLAIEYDPNRNARIALVQYTDGEKRYILHPVGLKVGARISAGEDAPIELGCALPLEKLPLGSNVHNIELLPGRGGQMARAAGAVAQLMAKEGDYATLRLPSGEVRVVRKECYATLGQVGNLDAKNISIGKAGRQRWLGKRPHNRGVVMNAVDHPHGGGEGKSPIGGKPQTPWGKSALGTKTRKRRKPSSKFIIRRRKTASGRG.

Disordered regions lie at residues 1 to 25 (MGIR…AEVT) and 230 to 280 (HPHG…SGRG). Basic residues predominate over residues 257 to 280 (KTRKRRKPSSKFIIRRRKTASGRG).

It belongs to the universal ribosomal protein uL2 family. In terms of assembly, part of the 50S ribosomal subunit. Forms a bridge to the 30S subunit in the 70S ribosome.

In terms of biological role, one of the primary rRNA binding proteins. Required for association of the 30S and 50S subunits to form the 70S ribosome, for tRNA binding and peptide bond formation. It has been suggested to have peptidyltransferase activity; this is somewhat controversial. Makes several contacts with the 16S rRNA in the 70S ribosome. The chain is Large ribosomal subunit protein uL2 from Gloeobacter violaceus (strain ATCC 29082 / PCC 7421).